Reading from the N-terminus, the 396-residue chain is Elongation factor Tu (396 aa).

A tr-type G domain is found at 10–206 (KPHVNVGTIG…ALDTYIPTPE (197 aa)). The tract at residues 19-26 (GHVDHGKT) is G1. 19-26 (GHVDHGKT) is a binding site for GTP. Mg(2+) is bound at residue threonine 26. The tract at residues 60-64 (GITIN) is G2. The tract at residues 81–84 (DCPG) is G3. GTP-binding positions include 81 to 85 (DCPGH) and 136 to 139 (NKCD). The tract at residues 136–139 (NKCD) is G4. The segment at 174–176 (SAK) is G5.

This sequence belongs to the TRAFAC class translation factor GTPase superfamily. Classic translation factor GTPase family. EF-Tu/EF-1A subfamily. Monomer.

It is found in the cytoplasm. It catalyses the reaction GTP + H2O = GDP + phosphate + H(+). GTP hydrolase that promotes the GTP-dependent binding of aminoacyl-tRNA to the A-site of ribosomes during protein biosynthesis. The polypeptide is Elongation factor Tu (Burkholderia cenocepacia (strain HI2424)).